A 343-amino-acid chain; its full sequence is MPDPRFYEDLGPVPLAELAKLGGADLPAGADGARLIRAAAVLAHAGPDTVTFLTDRKHLPGLARLEGACFVQARDASVLPDGCIPLVTRNPHGAYALAAQTLHRPRAVGSDAIAPDVVLEPGVELGAGVVLGPGVKVGRGTRIGPNAVVGAGVAIGRECDIGANVTLGFALLGDRVRILAGAVIGEPGFGATAGAQGLIDIPQLGRVIIQDGVTIGANTTIDRGAFDDTVIGENTKIDNLVQIAHNVRVGRNCVMAAHTGISGSVEIGEGAQFGGRAGVADHVTIGAGARVGAAAGVMKDIPAGETWGGMPARPIRHWLKETAWLARMANRRGPDGKGAGNDA.

The Proton acceptor role is filled by His-245.

It belongs to the transferase hexapeptide repeat family. LpxD subfamily. In terms of assembly, homotrimer.

It catalyses the reaction a UDP-3-O-[(3R)-3-hydroxyacyl]-alpha-D-glucosamine + a (3R)-hydroxyacyl-[ACP] = a UDP-2-N,3-O-bis[(3R)-3-hydroxyacyl]-alpha-D-glucosamine + holo-[ACP] + H(+). It participates in bacterial outer membrane biogenesis; LPS lipid A biosynthesis. Functionally, catalyzes the N-acylation of UDP-3-O-acylglucosamine using 3-hydroxyacyl-ACP as the acyl donor. Is involved in the biosynthesis of lipid A, a phosphorylated glycolipid that anchors the lipopolysaccharide to the outer membrane of the cell. The sequence is that of UDP-3-O-acylglucosamine N-acyltransferase from Phenylobacterium zucineum (strain HLK1).